Consider the following 396-residue polypeptide: Obg-like ATPase 1 (396 aa).

Residues 23-283 enclose the OBG-type G domain; that stretch reads LKIGIVGLPN…LSAEERQKYL (261 aa). Residue 32 to 37 coordinates ATP; it reads NVGKST. Mg(2+) contacts are provided by S36 and T56. L231 is a binding site for ATP. The Nuclear export signal motif lies at 267-274; the sequence is LELKLQEL. The residue at position 294 (K294) is an N6-acetyllysine. Residues 304–387 form the TGS domain; that stretch reads QLEYFFTAGP…EDGDIIFFKF (84 aa).

This sequence belongs to the TRAFAC class OBG-HflX-like GTPase superfamily. OBG GTPase family. YchF/OLA1 subfamily. Monomer. Requires Mg(2+) as cofactor. Expressed in all tissues tested but its expression is more abundant in testis, liver, lung, and brain. Overexpressed in several malignancies, including cancers of the colon, rectum, ovary, lung, stomach, and uterus.

It is found in the cytoplasm. The protein resides in the nucleus. Its subcellular location is the nucleolus. Functionally, hydrolyzes ATP, and can also hydrolyze GTP with lower efficiency. Has lower affinity for GTP. The protein is Obg-like ATPase 1 of Homo sapiens (Human).